The following is a 984-amino-acid chain: METKGYHSLPEGLDMERRWGQVSQTVEHSSLGSTERTDENNYMEIVNVSCVSGAIPNNSTQGSSKEKHELLPCLQQDNNRPGILTSDIKTELESKELSATVAESMGLYMDSVRDADYSYEQQNQQRSMSPAKIYQNVEQLVKFYKENGHRPSTLSCVNRPLRSFMSDSGSSVNGGVMRAIVKSPIMCHEKSPSVCSPLNMTSSVCSPAGINSVSSTTASFGSFPVHSPITQGTPLTCSPNVENRGSRSHSPAHASNVGSPLSSPLSSMKSSISSPPSHCSVKSPVSSPNNVTLRSSVSSPANINNSRCSVSSPSNTNNRSTLSSPAASTVGSICSPVNNAFSYTASGTSAGSSTSRDVVPSPDTQEKGAQEVLFPKTEEVESAISNGVTGQLNIVQYIKPEPDGAFSSSCLGGNSKINSDSPFSVPIKQESTKHSCSGTSFKGNPTVNPFPFMDGSYFSFMDDKDYYSLSGILGPPVPGFDGNCEGSGFPVGIKQEPDDGSYYPEASIPSSAIVGVNSGGQSFHYRIGAQGTISLSRSARDQSFQHLSSFPPVNTLVESWKSHGDLSSRRSDGYPVLEYIPENVSSSTLRSVSTGSSRPSKICLVCGDEASGCHYGVVTCGSCKVFFKRAVEGQHNYLCAGRNDCIIDKIRRKNCPACRLQKCLQAGMNLGARKSKKLGKLKGIHEEQPQQQQPPPPPPPPQSPEEGTTYIAPAKEPSVNTALVPQLSTISRALTPSPAMILENIEPEVVYAGYDNSKPDTAENLLSTLNRLAGKQMIQVVKWAKVLPGFKNLPLEDQITLIQYSWMCLSSFALSWRSYKHTNSQFLYFAPDLVFNEEKMHQSAMYELCQGMHQISLQFIRLQLTFEEYTIMKVLLLLSTVPKDGLKSQAAFEEMRTNYIKELRKMVTKCPNNSGQSWQRFYQLTKLLDSMHDLVNDLLEFCFYTFRESQALKVEFPAMLVEIISDQLPKVESGNAKPLYFHRK.

The segment at 1-602 (METKGYHSLP…STGSSRPSKI (602 aa)) is modulating. Residues 231-243 (QGTPLTCSPNVEN) are compositionally biased toward polar residues. Disordered regions lie at residues 231-329 (QGTP…AAST) and 346-369 (SGTSAGSSTSRDVVPSPDTQEKGA). A phosphoserine mark is found at Ser-250, Ser-259, Ser-283, Ser-287, and Ser-299. The span at 259-291 (SPLSSPLSSMKSSISSPPSHCSVKSPVSSPNNV) shows a compositional bias: low complexity. Over residues 292 to 329 (TLRSSVSSPANINNSRCSVSSPSNTNNRSTLSSPAAST) the composition is skewed to polar residues. Over residues 346 to 355 (SGTSAGSSTS) the composition is skewed to low complexity. Cys-603, Cys-606, Cys-620, Cys-623, Cys-639, Cys-645, Cys-655, and Cys-658 together coordinate Zn(2+). 2 NR C4-type zinc fingers span residues 603 to 623 (CLVCGDEASGCHYGVVTCGSC) and 639 to 663 (CAGRNDCIIDKIRRKNCPACRLQKC). Positions 603–668 (CLVCGDEASG…RLQKCLQAGM (66 aa)) form a DNA-binding region, nuclear receptor. Residues 669 to 725 (NLGARKSKKLGKLKGIHEEQPQQQQPPPPPPPPQSPEEGTTYIAPAKEPSVNTALVP) are hinge. The interval 684–710 (IHEEQPQQQQPPPPPPPPQSPEEGTTY) is disordered. The span at 692–703 (QQPPPPPPPPQS) shows a compositional bias: pro residues. In terms of domain architecture, NR LBD spans 726 to 964 (QLSTISRALT…EFPAMLVEII (239 aa)). Residues Asn-770 and Gln-776 each coordinate 21-hydroxyprogesterone. Residues Asn-770 and Gln-776 each coordinate aldosterone. Positions 770 and 776 each coordinate progesterone. Positions 782 to 785 (KWAK) are important for coactivator binding. The 21-hydroxyprogesterone site is built by Arg-817 and Thr-945. Positions 817 and 945 each coordinate aldosterone. Progesterone is bound by residues Arg-817 and Thr-945.

The protein belongs to the nuclear hormone receptor family. NR3 subfamily. As to quaternary structure, heteromultimeric cytoplasmic complex with HSP90, HSP70, and FKBP4, in the absence of ligand. After ligand binding, it translocates to the nucleus and binds to DNA as a homodimer and as a heterodimer with NR3C1. Binds the coactivator NCOA2. May interact with HSD11B2 in the absence of ligand. Binds the coactivators NCOA1, TIF1 and NRIP1. Phosphorylated.

It is found in the cytoplasm. It localises to the nucleus. The protein localises to the endoplasmic reticulum membrane. In terms of biological role, receptor for both mineralocorticoids (MC) such as aldosterone and glucocorticoids (GC) such as corticosterone or cortisol. Binds to mineralocorticoid response elements (MRE) and transactivates target genes. The effect of MC is to increase ion and water transport and thus raise extracellular fluid volume and blood pressure and lower potassium levels. The polypeptide is Mineralocorticoid receptor (NR3C2) (Aotus nancymaae (Ma's night monkey)).